Here is a 635-residue protein sequence, read N- to C-terminus: Leucine-rich repeat and fibronectin type-III domain-containing protein 4 (635 aa).

The N-terminal stretch at 1–16 is a signal peptide; sequence MAPPLLLLLLASGAAA. One can recognise an LRRNT domain in the interval 17–48; it reads CPLPCVCQNLSESLSTLCAHRGLLFVPPNVDR. The Extracellular portion of the chain corresponds to 17 to 518; the sequence is CPLPCVCQNL…LQAHVLGGTL (502 aa). N-linked (GlcNAc...) asparagine glycans are attached at residues asparagine 25 and asparagine 70. LRR repeat units lie at residues 49 to 70, 73 to 94, 97 to 118, 121 to 142, 146 to 161, 170 to 191, and 194 to 215; these read RTVE…DFRN, GLVD…AFGD, SLRS…SLRG, NLQH…AFDD, SLED…RQVP, ALHT…AFAQ, and QLSR…PLFS. Positions 234-280 constitute an LRRCT domain; the sequence is NPLHCNCELLWLRRLARPDDLETCASPPGLAGRYFWAVPEGEFSCEP. The Ig-like domain maps to 281-367; that stretch reads PLIARHTQRL…GEATARVELR (87 aa). A disulfide bridge connects residues cysteine 302 and cysteine 351. N-linked (GlcNAc...) asparagine glycosylation is found at asparagine 324, asparagine 333, asparagine 376, and asparagine 440. The segment at 373–410 is disordered; that stretch reads HGGNSSAEGGRPGPSDIAASARTAAEGEGTLESEPAVQ. The Fibronectin type-III domain occupies 405–502; it reads SEPAVQVTEV…GCAHFSTLPA (98 aa). Residues 519–539 form a helical membrane-spanning segment; it reads TVAVGGVLVAALLVFTVALLV. The Cytoplasmic segment spans residues 540–635; the sequence is RGRGAGNGRL…SAERLEESVV (96 aa). A disordered region spans residues 555–583; the sequence is HVQSQTNGGPSPTPKAHPPRSPPPRPQRS. Positions 565–580 are enriched in pro residues; that stretch reads SPTPKAHPPRSPPPRP. Residues serine 585 and serine 626 each carry the phosphoserine modification. The PDZ-binding motif lies at 632–635; that stretch reads ESVV.

It belongs to the LRFN family. Can form heteromeric complexes with LRFN1, LRFN2, LRFN3 and LRFN5. Unable to form homophilic interactions across cell junctions. Interacts with DLG1, DLG2, DLG3 and DLG4. Post-translationally, glycosylated.

It is found in the membrane. In terms of biological role, promotes neurite outgrowth in hippocampal neurons. May play a role in redistributing DLG4 to the cell periphery. The chain is Leucine-rich repeat and fibronectin type-III domain-containing protein 4 (LRFN4) from Homo sapiens (Human).